A 295-amino-acid polypeptide reads, in one-letter code: Protease HtpX (295 aa).

Helical transmembrane passes span 4–24 (ILLFLATNLAVVLIASITLSL) and 42–62 (QLLVFCAVFGFAGSLFSLFIS). Residue H147 participates in Zn(2+) binding. Residue E148 is part of the active site. Position 151 (H151) interacts with Zn(2+). Helical transmembrane passes span 158 to 178 (VTLALVQGVVNTFVMFFARII) and 199 to 219 (ITTIFAELVLGFLASAIVMWF). Zn(2+) is bound at residue E224.

Belongs to the peptidase M48B family. Zn(2+) is required as a cofactor.

The protein resides in the cell inner membrane. This chain is Protease HtpX, found in Pseudomonas syringae pv. tomato (strain ATCC BAA-871 / DC3000).